Consider the following 3722-residue polypeptide: Vitelline envelope sperm lysin receptor (3722 aa).

The N-terminal stretch at 1 to 24 (MSGMQWSFGFSCLFFLKTVWICQA) is a signal peptide. At 25-3698 (FDADTPDPRV…TPSTDMATVQ (3674 aa)) the chain is on the extracellular side. Cystine bridges form between C43/C141 and C72/C104. The VERL 1 repeat unit spans residues 77–155 (MQMTRGRGIN…SQASNAPEPK (79 aa)). N115, N122, and N142 each carry an N-linked (GlcNAc...) asparagine glycan. The tract at residues 146-169 (SQASNAPEPKASPTSSTPQPEAAS) is disordered. The span at 157 to 169 (SPTSSTPQPEAAS) shows a compositional bias: polar residues. N171 carries N-linked (GlcNAc...) asparagine glycosylation. Cystine bridges form between C182/C280 and C211/C243. The VERL 2 repeat unit spans residues 216–293 (VPITHEHGFN…KSPDAPKPES (78 aa)). N-linked (GlcNAc...) asparagine glycosylation is present at N254. Residues 279-335 (QCYMPKSPDAPKPESCLSSPPEPEASPSSNAPEPETYPTSSAPEKVSSDQPAPSHNQ) form a disordered region. Residues 291–312 (PESCLSSPPEPEASPSSNAPEP) show a composition bias toward low complexity. A compositionally biased stretch (polar residues) spans 315-335 (YPTSSAPEKVSSDQPAPSHNQ). N334 and N373 each carry an N-linked (GlcNAc...) asparagine glycan. 2 cysteine pairs are disulfide-bonded: C345-C443 and C374-C406. The stretch at 379 to 455 (VPITQEFGIN…PKSPVAPKPE (77 aa)) is one VERL 3 repeat. N417, N438, N487, N501, N526, N570, N591, N640, N654, N679, N723, N744, N793, N807, N832, N876, N897, N946, N960, N985, N1029, N1050, N1099, N1113, N1138, N1182, N1203, N1252, N1266, N1291, N1335, N1356, N1405, N1419, N1443, and N1487 each carry an N-linked (GlcNAc...) asparagine glycan. Positions 443-488 (CYMPKSPVAPKPETGPTSNAPEPETYPTSSAPEKVSSDQPAPSHNQ) are disordered. The span at 457–488 (GPTSNAPEPETYPTSSAPEKVSSDQPAPSHNQ) shows a compositional bias: polar residues. The VERL 4 repeat unit spans residues 532-608 (VPITQEFGIN…PKSPVAPKPE (77 aa)). Residues 603–641 (VAPKPETGPTSNAPEPETYPTSSAPEKVSSDQPAPSHNQ) are disordered. Over residues 610–641 (GPTSNAPEPETYPTSSAPEKVSSDQPAPSHNQ) the composition is skewed to polar residues. The stretch at 685–761 (VPITQEFGIN…PKSPVAPKPE (77 aa)) is one VERL 5 repeat. Residues 756-794 (VAPKPETGPSSNAPEPETYPTSSAPEKVSSDQPAPSHNQ) are disordered. Over residues 763–794 (GPSSNAPEPETYPTSSAPEKVSSDQPAPSHNQ) the composition is skewed to polar residues. The VERL 6 repeat unit spans residues 838–914 (VPITQEFGIN…PKSPVAPKPE (77 aa)). Residues 909–947 (VAPKPETGPTSNAPEPETYPTSSAPEKVSSDQPAPSHNQ) are disordered. Positions 916–947 (GPTSNAPEPETYPTSSAPEKVSSDQPAPSHNQ) are enriched in polar residues. A VERL 7 repeat occupies 991-1067 (VPITHEFGIN…PKSPVAPKPE (77 aa)). A disordered region spans residues 1062-1100 (VAPKPETGPTSNAPEPETYPTSSAPEKVSSDQPAPSHNQ). Polar residues predominate over residues 1069–1100 (GPTSNAPEPETYPTSSAPEKVSSDQPAPSHNQ). One copy of the VERL 8 repeat lies at 1144–1220 (VPITQEFGIN…PKSPVAPKPE (77 aa)). The segment at 1215 to 1253 (VAPKPETGPTSNAPEPETYPTSSAPEKVSSDQPAPSHNQ) is disordered. A compositionally biased stretch (polar residues) spans 1222 to 1253 (GPTSNAPEPETYPTSSAPEKVSSDQPAPSHNQ). Residues 1297–1373 (VPITHKFGIN…PKSPVAHKPE (77 aa)) form a VERL 9 repeat. The segment at 1368 to 1406 (VAHKPETGPTSNAPEPETYPTSSAPEKVSSDQPAPSHNQ) is disordered. Polar residues predominate over residues 1375–1406 (GPTSNAPEPETYPTSSAPEKVSSDQPAPSHNQ). Residues 1449–1525 (VPITHEFGIN…PKSPVAPKPE (77 aa)) form a VERL 10 repeat. Residues 1519–1556 (PVAPKPETGPSSNAPEPETYPTSSAPEKVYSDQPAPSH) are disordered. Positions 1527–1543 (GPSSNAPEPETYPTSSA) are enriched in polar residues. N-linked (GlcNAc...) asparagine glycans are attached at residues N1557, N1571, N1596, N1640, N1661, N1710, N1724, N1749, N1793, N1814, N1863, N1877, N1902, N1946, N1967, N2016, N2030, N2055, N2099, N2120, N2169, N2183, N2208, N2252, N2273, N2322, N2336, N2361, N2405, N2426, N2475, N2489, N2514, N2558, N2579, N2628, N2642, N2667, N2711, N2732, N2781, N2795, N2820, N2864, N2885, N2934, N2948, N2973, N3017, N3038, N3087, N3101, N3126, N3170, N3191, N3229, N3243, N3268, N3312, and N3333. One copy of the VERL 11 repeat lies at 1602-1678 (VPITHEFGIN…PKSPVAPKPE (77 aa)). Residues 1672–1711 (PVAPKPETGPTSNAPEPQTYPTSSAPEKVSSDQPAPSHNQ) are disordered. Residues 1680–1711 (GPTSNAPEPQTYPTSSAPEKVSSDQPAPSHNQ) show a composition bias toward polar residues. Residues 1755 to 1831 (VPITQEFGIN…PKSPVAPKPE (77 aa)) form a VERL 12 repeat. The tract at residues 1826 to 1864 (VAPKPETGPTSNAPEPETYPTSSAPEKVSSDQPAPSHNQ) is disordered. Residues 1833-1864 (GPTSNAPEPETYPTSSAPEKVSSDQPAPSHNQ) are compositionally biased toward polar residues. Residues 1908-1984 (VPITHEFGIN…PKSPVAPKPE (77 aa)) form a VERL 13 repeat. The disordered stretch occupies residues 1979-2017 (VAPKPETGPTSNAPEPETYPTSSAPEKVSSDQPAPSHNQ). Residues 1986–2017 (GPTSNAPEPETYPTSSAPEKVSSDQPAPSHNQ) are compositionally biased toward polar residues. A VERL 14 repeat occupies 2061 to 2137 (VPITQEFGIN…PKSPVAPKPE (77 aa)). The tract at residues 2132–2170 (VAPKPETGPTSNAPEPETYPTSSAPEKVSSDQPAPSHNQ) is disordered. Residues 2139 to 2170 (GPTSNAPEPETYPTSSAPEKVSSDQPAPSHNQ) show a composition bias toward polar residues. A VERL 15 repeat occupies 2214–2290 (VPITQEFGIN…PKSPVAPKPE (77 aa)). The disordered stretch occupies residues 2285–2323 (VAPKPETGPTSNAPEPETYPTSSAPEKVSSDQPAPSHNQ). Polar residues predominate over residues 2292-2323 (GPTSNAPEPETYPTSSAPEKVSSDQPAPSHNQ). A VERL 16 repeat occupies 2367 to 2443 (VPITQEFGIN…PKSPVAPKPE (77 aa)). The tract at residues 2438 to 2476 (VAPKPETGPTSNAPEPETYPTSSAPEKVSSDQPAPSHNQ) is disordered. Residues 2445–2476 (GPTSNAPEPETYPTSSAPEKVSSDQPAPSHNQ) are compositionally biased toward polar residues. One copy of the VERL 17 repeat lies at 2520-2596 (VPITQEFGIN…PKSPVAPKPE (77 aa)). A disordered region spans residues 2590 to 2629 (PVAPKPETGPTSNAPEPQTYPTSSAPEKVSSDQPAPSHNQ). Over residues 2598–2629 (GPTSNAPEPQTYPTSSAPEKVSSDQPAPSHNQ) the composition is skewed to polar residues. The stretch at 2673 to 2749 (VPITQEFGIN…PKSPVAPKPE (77 aa)) is one VERL 18 repeat. A disordered region spans residues 2744 to 2782 (VAPKPETGPTSNAPEPETYPTSSAPEKVSSDQPAPSHNQ). The segment covering 2751-2782 (GPTSNAPEPETYPTSSAPEKVSSDQPAPSHNQ) has biased composition (polar residues). One copy of the VERL 19 repeat lies at 2826 to 2902 (VPITHEFGIN…PKSPVAPKPE (77 aa)). The disordered stretch occupies residues 2897 to 2935 (VAPKPETGPTSNAPEPQTYPTSSAPEKVSSDQPAPSHNQ). Over residues 2904 to 2935 (GPTSNAPEPQTYPTSSAPEKVSSDQPAPSHNQ) the composition is skewed to polar residues. A VERL 20 repeat occupies 2979–3055 (VPITQEFGIN…PKSPVAPKPE (77 aa)). Residues 3050 to 3088 (VAPKPETGPTSNAPEPETYPTSSAPEKVSSDQPAPSHNQ) form a disordered region. A compositionally biased stretch (polar residues) spans 3057–3088 (GPTSNAPEPETYPTSSAPEKVSSDQPAPSHNQ). Residues 3132–3208 (VPITQEFGIN…PKSPVAPKPE (77 aa)) form a VERL 21 repeat. Residues 3205-3230 (PKPETYPTSSAPEKVSSDQPAPSHNQ) are disordered. Residues 3210–3230 (YPTSSAPEKVSSDQPAPSHNQ) are compositionally biased toward polar residues. The VERL 22 repeat unit spans residues 3274 to 3351 (VPITHEFGIN…KSPVAPKPEA (78 aa)). The tract at residues 3345–3407 (VAPKPEASPT…RKSNQTTSTE (63 aa)) is disordered. Over residues 3352 to 3375 (SPTSNAPEPQTYPTSSAPGTSPEG) the composition is skewed to polar residues. 6 N-linked (GlcNAc...) asparagine glycosylation sites follow: N3388, N3401, N3449, N3456, N3559, and N3650. The 263-residue stretch at 3408 to 3670 (DVLDDTSNYI…SSCSNQRRTR (263 aa)) folds into the ZP domain. A helical transmembrane segment spans residues 3699–3719 (VALLVAVALLITQLAGLAIYV). Over 3720 to 3722 (NIN) the chain is Cytoplasmic.

As to quaternary structure, may form disulfide-linked homodimers. Interacts (via VERL repeats) with sperm lysin. Each VERL chain can bind numerous lysin molecules. In terms of processing, N-glycosylated. About half of the glycoprotein mass corresponds to carbohydrate chains. N-glycosylation is not required for lysin binding. O-glycosylated. O-glycosylation is not required for lysin binding.

It is found in the cell membrane. The protein localises to the secreted. The protein resides in the extracellular space. Its subcellular location is the extracellular matrix. In terms of biological role, structural component of the egg vitelline envelope; forms long filaments. Functions as a species-specific receptor for the sperm protein lysin; prevents fertilization by sperm from other species. Each VERL chain can bind multiple copies of the sperm protein lysin; this creates a 3 um hole in the egg vitelline envelope through which the sperm passes. The protein is Vitelline envelope sperm lysin receptor of Haliotis rufescens (California red abalone).